Consider the following 441-residue polypeptide: Homogentisate 1,2-dioxygenase (441 aa).

The Proton acceptor role is filled by H287. Residues H330 and E336 each contribute to the Fe cation site. Y345 and H366 together coordinate homogentisate. H366 provides a ligand contact to Fe cation.

The protein belongs to the homogentisate dioxygenase family. In terms of assembly, hexamer; dimer of trimers. It depends on Fe cation as a cofactor.

The catalysed reaction is homogentisate + O2 = 4-maleylacetoacetate + H(+). The protein operates within amino-acid degradation; L-phenylalanine degradation; acetoacetate and fumarate from L-phenylalanine: step 4/6. Its function is as follows. Involved in the catabolism of homogentisate (2,5-dihydroxyphenylacetate or 2,5-OH-PhAc), a central intermediate in the degradation of phenylalanine and tyrosine. Catalyzes the oxidative ring cleavage of the aromatic ring of homogentisate to yield maleylacetoacetate. The sequence is that of Homogentisate 1,2-dioxygenase from Xanthomonas oryzae pv. oryzae (strain KACC10331 / KXO85).